A 201-amino-acid polypeptide reads, in one-letter code: Probable quinol oxidase subunit 3 (201 aa).

5 helical membrane-spanning segments follow: residues 20-40 (LGFWIFLTAEFSLFGTLFATL), 62-82 (LVLIMTFALLISSYTCGISIY), 91-111 (LMMFWMILTVLLGLVFVGFEI), 133-153 (FFILLGTHGAHVSLGIGWIIC), and 172-192 (FIVSLYWHFLDVVWIFIFTAV).

It belongs to the cytochrome c oxidase subunit 3 family.

The protein localises to the cell membrane. It catalyses the reaction 2 a quinol + O2 = 2 a quinone + 2 H2O. Catalyzes quinol oxidation with the concomitant reduction of oxygen to water. In Staphylococcus haemolyticus (strain JCSC1435), this protein is Probable quinol oxidase subunit 3 (qoxC).